An 83-amino-acid polypeptide reads, in one-letter code: U5-theraphotoxin-Hs1b 2 (83 aa).

An N-terminal signal peptide occupies residues 1-21 (MQTSMFLTLTGLVLLFVVCYA). A propeptide spanning residues 22–49 (SESEEKEFPKELLSSIFAADSDFKEEER) is cleaved from the precursor. 3 cysteine pairs are disulfide-bonded: Cys-51/Cys-63, Cys-56/Cys-68, and Cys-62/Cys-75.

The protein belongs to the neurotoxin 10 (Hwtx-1) family. 51 (Hntx-8) subfamily. Hntx-8 sub-subfamily. Expressed by the venom gland.

It localises to the secreted. Functionally, agglutinates erythrocytes. The protein is U5-theraphotoxin-Hs1b 2 of Cyriopagopus schmidti (Chinese bird spider).